The primary structure comprises 443 residues: MDFDLNGGNKRVFNRLGGGGGSTRPMAPTDTRQKVCFHWRAGRCNRSPCPYLHRELPGPGPGQGQGPGYTNKRVAEESGFAGPSHRRGPGFNGNSSSSWGRFGGNRTVTKTEKVCNFWVDGNCTYGDKCRYLHCWSKGESFALLTQLDGHEKLVSGIALPSGSDKLYTGSKDETLRVWDCASGQCTGVLKLGGEIGCVLSEGPWLLVGMPNLVKAWNIETNADQSLSGPVGQVYSLVVGTDLLFAGTQDGSILAWRYNAATNCFEPSASLTGHTLAVVTLYVGANRLYSGSMDKTIKVWSLDNLQCIQTLTDHSSVVMSLICWDQFLLSCSLDNTVKIWAAIEGGNLEVTYTHKEEHGVLALCGVHDAEAKPVLLCACNDNTLRLYDLPSLGLFIRFTERGKIFAKQEIRAIQIGPGGIFFTGDGTGQVKVWKWCTEPTAALP.

Disordered regions lie at residues 1–29 (MDFDLNGGNKRVFNRLGGGGGSTRPMAPT) and 56–99 (LPGP…SSSW). 2 consecutive C3H1-type zinc fingers follow at residues 30–56 (DTRQKVCFHWRAGRCNRSPCPYLHREL) and 109–136 (TKTEKVCNFWVDGNCTYGDKCRYLHCWS). 6 WD repeats span residues 149–190 (GHEK…GVLK), 228–265 (GPVGQVYSLVVGTDLLFAGTQDGSILAWRYNAATNCFE), 272–311 (GHTLAVVTLYVGANRLYSGSMDKTIKVWSLDNLQCIQTLT), 313–349 (HSSVVMSLICWDQFLLSCSLDNTVKIWAAIEGGNLEV), 354–396 (KEEH…LFIR), and 404–442 (FAKQEIRAIQIGPGGIFFTGDGTGQVKVWKWCTEPTAAL).

This is Zinc finger CCCH domain-containing protein 63 (ZFWD2) from Arabidopsis thaliana (Mouse-ear cress).